A 634-amino-acid polypeptide reads, in one-letter code: Threonine--tRNA ligase (634 aa).

The TGS domain maps to 1–61 (MINITLPDGS…DHDASLRIIT (61 aa)). Residues 243-534 (DHRRIGKAQD…LIEHHAGAFP (292 aa)) form a catalytic region. Positions 334, 385, and 511 each coordinate Zn(2+).

It belongs to the class-II aminoacyl-tRNA synthetase family. As to quaternary structure, homodimer. The cofactor is Zn(2+).

Its subcellular location is the cytoplasm. It carries out the reaction tRNA(Thr) + L-threonine + ATP = L-threonyl-tRNA(Thr) + AMP + diphosphate + H(+). Its function is as follows. Catalyzes the attachment of threonine to tRNA(Thr) in a two-step reaction: L-threonine is first activated by ATP to form Thr-AMP and then transferred to the acceptor end of tRNA(Thr). Also edits incorrectly charged L-seryl-tRNA(Thr). This chain is Threonine--tRNA ligase, found in Xanthomonas euvesicatoria pv. vesicatoria (strain 85-10) (Xanthomonas campestris pv. vesicatoria).